We begin with the raw amino-acid sequence, 165 residues long: Protein SprT (165 aa).

A SprT-like domain is found at 20–163 (ENLAQANLKL…RCVHCGEPLV (144 aa)). Zn(2+) is bound at residue H78. The active site involves E79. H82 is a binding site for Zn(2+).

Belongs to the SprT family. Zn(2+) is required as a cofactor.

It localises to the cytoplasm. This is Protein SprT from Salmonella arizonae (strain ATCC BAA-731 / CDC346-86 / RSK2980).